Consider the following 130-residue polypeptide: L-ectoine synthase (130 aa).

The protein belongs to the ectoine synthase family.

It carries out the reaction (2S)-4-acetamido-2-aminobutanoate = L-ectoine + H2O. Its pathway is amine and polyamine biosynthesis; ectoine biosynthesis; L-ectoine from L-aspartate 4-semialdehyde: step 3/3. In terms of biological role, catalyzes the circularization of gamma-N-acetyl-alpha,gamma-diaminobutyric acid (ADABA) to ectoine (1,4,5,6-tetrahydro-2-methyl-4-pyrimidine carboxylic acid), which is an excellent osmoprotectant. The chain is L-ectoine synthase from Mycolicibacterium gilvum (strain PYR-GCK) (Mycobacterium gilvum (strain PYR-GCK)).